The chain runs to 150 residues: uncharacterized protein (150 aa).

4 helical membrane passes run 32–52, 64–84, 94–114, and 123–143; these read ILYG…AVSL, FNWL…FISG, IGAL…YLGF, and LIFH…GVNM.

Its subcellular location is the cell membrane. This is an uncharacterized protein from Bacillus subtilis (strain 168).